Consider the following 522-residue polypeptide: GMP synthase [glutamine-hydrolyzing] (522 aa).

Residues Lys9–Leu204 form the Glutamine amidotransferase type-1 domain. Cys86 acts as the Nucleophile in catalysis. Active-site residues include His178 and Glu180. A GMPS ATP-PPase domain is found at Trp205–Arg397. An ATP-binding site is contributed by Ser232–Ser238.

As to quaternary structure, homodimer.

It catalyses the reaction XMP + L-glutamine + ATP + H2O = GMP + L-glutamate + AMP + diphosphate + 2 H(+). The protein operates within purine metabolism; GMP biosynthesis; GMP from XMP (L-Gln route): step 1/1. In terms of biological role, catalyzes the synthesis of GMP from XMP. In Xylella fastidiosa (strain M23), this protein is GMP synthase [glutamine-hydrolyzing].